The chain runs to 347 residues: Inositol 2-dehydrogenase (347 aa).

It belongs to the Gfo/Idh/MocA family. Homotetramer.

The catalysed reaction is myo-inositol + NAD(+) = scyllo-inosose + NADH + H(+). Functionally, involved in the oxidation of myo-inositol (MI) to 2-keto-myo-inositol (2KMI or 2-inosose). The polypeptide is Inositol 2-dehydrogenase (Rubrobacter xylanophilus (strain DSM 9941 / JCM 11954 / NBRC 16129 / PRD-1)).